A 344-amino-acid chain; its full sequence is tRNA-specific 2-thiouridylase MnmA (344 aa).

Residues 9-16 and Met-34 each bind ATP; that span reads AMSGGVDS. Cys-92 serves as the catalytic Nucleophile. Cys-92 and Cys-188 are disulfide-bonded. Gly-116 contacts ATP. An interaction with tRNA region spans residues 138–140; the sequence is KDQ. The active-site Cysteine persulfide intermediate is Cys-188.

Belongs to the MnmA/TRMU family.

It is found in the cytoplasm. It carries out the reaction S-sulfanyl-L-cysteinyl-[protein] + uridine(34) in tRNA + AH2 + ATP = 2-thiouridine(34) in tRNA + L-cysteinyl-[protein] + A + AMP + diphosphate + H(+). Its function is as follows. Catalyzes the 2-thiolation of uridine at the wobble position (U34) of tRNA, leading to the formation of s(2)U34. The protein is tRNA-specific 2-thiouridylase MnmA of Desulfotalea psychrophila (strain LSv54 / DSM 12343).